The sequence spans 132 residues: Large ribosomal subunit protein bL17 (132 aa).

It belongs to the bacterial ribosomal protein bL17 family. Part of the 50S ribosomal subunit. Contacts protein L32.

The sequence is that of Large ribosomal subunit protein bL17 from Leptothrix cholodnii (strain ATCC 51168 / LMG 8142 / SP-6) (Leptothrix discophora (strain SP-6)).